Here is a 359-residue protein sequence, read N- to C-terminus: Chorismate synthase (359 aa).

Arg47 is a binding site for NADP(+). Residues 123–125 (RSS), Gly283, 298–302 (KPTSS), and Arg326 each bind FMN.

It belongs to the chorismate synthase family. Homotetramer. FMNH2 is required as a cofactor.

It carries out the reaction 5-O-(1-carboxyvinyl)-3-phosphoshikimate = chorismate + phosphate. Its pathway is metabolic intermediate biosynthesis; chorismate biosynthesis; chorismate from D-erythrose 4-phosphate and phosphoenolpyruvate: step 7/7. In terms of biological role, catalyzes the anti-1,4-elimination of the C-3 phosphate and the C-6 proR hydrogen from 5-enolpyruvylshikimate-3-phosphate (EPSP) to yield chorismate, which is the branch point compound that serves as the starting substrate for the three terminal pathways of aromatic amino acid biosynthesis. This reaction introduces a second double bond into the aromatic ring system. This chain is Chorismate synthase, found in Chlamydia abortus (strain DSM 27085 / S26/3) (Chlamydophila abortus).